We begin with the raw amino-acid sequence, 140 residues long: Large ribosomal subunit protein uL11 (140 aa).

Belongs to the universal ribosomal protein uL11 family. Part of the ribosomal stalk of the 50S ribosomal subunit. Interacts with L10 and the large rRNA to form the base of the stalk. L10 forms an elongated spine to which L12 dimers bind in a sequential fashion forming a multimeric L10(L12)X complex. In terms of processing, one or more lysine residues are methylated.

Its function is as follows. Forms part of the ribosomal stalk which helps the ribosome interact with GTP-bound translation factors. This Solidesulfovibrio magneticus (strain ATCC 700980 / DSM 13731 / RS-1) (Desulfovibrio magneticus) protein is Large ribosomal subunit protein uL11.